The following is a 398-amino-acid chain: Substance-K receptor (398 aa).

Over 1–32 the chain is Extracellular; it reads MGTCDIVTEANISSGPESNTTGITAFSMPSWQ. N-linked (GlcNAc...) asparagine glycosylation is found at asparagine 11 and asparagine 19. The helical transmembrane segment at 33–56 threads the bilayer; that stretch reads LALWATAYLALVLVAVTGNAIVIW. Residues 57–69 lie on the Cytoplasmic side of the membrane; the sequence is IILAHRRMRTVTN. The chain crosses the membrane as a helical span at residues 70–90; that stretch reads YFIVNLALADLCMAAFNAAFN. Topologically, residues 91–107 are extracellular; the sequence is FVYASHNIWYFGRAFCY. Cysteine 106 and cysteine 181 form a disulfide bridge. The helical transmembrane segment at 108-129 threads the bilayer; the sequence is FQNLFPITAMFVSIYSMTAIAA. Topologically, residues 130-149 are cytoplasmic; sequence DRYMAIVHPFQPRLSAPSTK. Residues 150–170 form a helical membrane-spanning segment; it reads AVIAGIWLVALALASPQCFYS. The Extracellular portion of the chain corresponds to 171–196; it reads TVTMDQGATKCVVAWPEDSGGKTLLL. A helical membrane pass occupies residues 197 to 218; the sequence is YHLVVIALIYFLPLAVMFVAYS. The Cytoplasmic portion of the chain corresponds to 219–251; sequence VIGLTLWRRAVPGHQAHGANLRHLQAMKKFVKT. The helical transmembrane segment at 252 to 272 threads the bilayer; it reads MVLVVLTFAICWLPYHLYFIL. The Extracellular portion of the chain corresponds to 273–290; that stretch reads GSFQEDIYCHKFIQQVYL. The chain crosses the membrane as a helical span at residues 291-310; it reads ALFWLAMSSTMYNPIIYCCL. At 311–398 the chain is on the cytoplasmic side; that stretch reads NHRFRSGFRL…LAPTKTHVEI (88 aa). A lipid anchor (S-palmitoyl cysteine) is attached at cysteine 324.

The protein belongs to the G-protein coupled receptor 1 family.

It localises to the cell membrane. Its function is as follows. This is a receptor for the tachykinin neuropeptide substance K (neurokinin A). It is associated with G proteins that activate a phosphatidylinositol-calcium second messenger system. The rank order of affinity of this receptor to tachykinins is: substance K &gt; neuromedin-K &gt; substance P. This Homo sapiens (Human) protein is Substance-K receptor (TACR2).